The following is a 273-amino-acid chain: 3-methyl-2-oxobutanoate hydroxymethyltransferase (273 aa).

Residues aspartate 53 and aspartate 92 each contribute to the Mg(2+) site. Residues 53–54, aspartate 92, and lysine 122 each bind 3-methyl-2-oxobutanoate; that span reads DS. Glutamate 124 provides a ligand contact to Mg(2+). Glutamate 191 functions as the Proton acceptor in the catalytic mechanism.

The protein belongs to the PanB family. As to quaternary structure, homodecamer; pentamer of dimers. Mg(2+) serves as cofactor.

Its subcellular location is the cytoplasm. The enzyme catalyses 3-methyl-2-oxobutanoate + (6R)-5,10-methylene-5,6,7,8-tetrahydrofolate + H2O = 2-dehydropantoate + (6S)-5,6,7,8-tetrahydrofolate. It functions in the pathway cofactor biosynthesis; (R)-pantothenate biosynthesis; (R)-pantoate from 3-methyl-2-oxobutanoate: step 1/2. Its function is as follows. Catalyzes the reversible reaction in which hydroxymethyl group from 5,10-methylenetetrahydrofolate is transferred onto alpha-ketoisovalerate to form ketopantoate. The protein is 3-methyl-2-oxobutanoate hydroxymethyltransferase of Bacteroides fragilis (strain ATCC 25285 / DSM 2151 / CCUG 4856 / JCM 11019 / LMG 10263 / NCTC 9343 / Onslow / VPI 2553 / EN-2).